Consider the following 363-residue polypeptide: tRNA dimethylallyltransferase (363 aa).

Positions 1 to 55 are unknown insert; it reads MLACNDDTSLYLLVKQVTKKEIYSNDLENGNVKRGASMQSLYLIGDPKCCRNNSS. Residue 65–72 participates in ATP binding; the sequence is GPTASGKS. Position 67 to 72 (67 to 72) interacts with substrate; sequence TASGKS. 2 interaction with substrate tRNA regions span residues 90–93 and 214–218; these read DSMQ and QRLIR.

It belongs to the IPP transferase family. As to quaternary structure, monomer. Requires Mg(2+) as cofactor.

The enzyme catalyses adenosine(37) in tRNA + dimethylallyl diphosphate = N(6)-dimethylallyladenosine(37) in tRNA + diphosphate. Functionally, catalyzes the transfer of a dimethylallyl group onto the adenine at position 37 in tRNAs that read codons beginning with uridine, leading to the formation of N6-(dimethylallyl)adenosine (i(6)A). The chain is tRNA dimethylallyltransferase from Rickettsia conorii (strain ATCC VR-613 / Malish 7).